A 498-amino-acid chain; its full sequence is ATP synthase subunit beta, chloroplastic (498 aa).

Residue G172 to T179 participates in ATP binding.

This sequence belongs to the ATPase alpha/beta chains family. F-type ATPases have 2 components, CF(1) - the catalytic core - and CF(0) - the membrane proton channel. CF(1) has five subunits: alpha(3), beta(3), gamma(1), delta(1), epsilon(1). CF(0) has four main subunits: a(1), b(1), b'(1) and c(9-12).

The protein localises to the plastid. The protein resides in the chloroplast thylakoid membrane. The catalysed reaction is ATP + H2O + 4 H(+)(in) = ADP + phosphate + 5 H(+)(out). In terms of biological role, produces ATP from ADP in the presence of a proton gradient across the membrane. The catalytic sites are hosted primarily by the beta subunits. This chain is ATP synthase subunit beta, chloroplastic, found in Calycanthus floridus var. glaucus (Eastern sweetshrub).